The sequence spans 342 residues: Spermidine synthase (342 aa).

The tract at residues methionine 9–glutamate 42 is disordered. In terms of domain architecture, PABS spans proline 52–threonine 289. Residue glutamine 83 participates in S-adenosyl 3-(methylsulfanyl)propylamine binding. Tyrosine 113 contacts putrescine. Residues glutamine 114, aspartate 138, glutamate 158, aspartate 189 to glycine 190, and aspartate 208 contribute to the S-adenosyl 3-(methylsulfanyl)propylamine site. Catalysis depends on aspartate 208, which acts as the Proton acceptor. Residues aspartate 208–aspartate 211 and tyrosine 277 each bind putrescine.

This sequence belongs to the spermidine/spermine synthase family.

The catalysed reaction is S-adenosyl 3-(methylsulfanyl)propylamine + putrescine = S-methyl-5'-thioadenosine + spermidine + H(+). It functions in the pathway amine and polyamine biosynthesis; spermidine biosynthesis; spermidine from putrescine: step 1/1. The polypeptide is Spermidine synthase (SPDSYN) (Solanum lycopersicum (Tomato)).